Reading from the N-terminus, the 338-residue chain is Glyceraldehyde-3-phosphate dehydrogenase (338 aa).

NAD(+)-binding positions include 12–13 (RI), Asp34, and Arg79. D-glyceraldehyde 3-phosphate contacts are provided by residues 150–152 (SCT), Thr181, 210–211 (TG), and Arg233. Cys151 acts as the Nucleophile in catalysis. Asn315 contacts NAD(+).

This sequence belongs to the glyceraldehyde-3-phosphate dehydrogenase family. As to quaternary structure, homotetramer.

It localises to the cytoplasm. The enzyme catalyses D-glyceraldehyde 3-phosphate + phosphate + NAD(+) = (2R)-3-phospho-glyceroyl phosphate + NADH + H(+). The protein operates within carbohydrate degradation; glycolysis; pyruvate from D-glyceraldehyde 3-phosphate: step 1/5. The sequence is that of Glyceraldehyde-3-phosphate dehydrogenase (gpd-1) from Neurospora crassa (strain ATCC 24698 / 74-OR23-1A / CBS 708.71 / DSM 1257 / FGSC 987).